We begin with the raw amino-acid sequence, 505 residues long: Pup deamidase/depupylase (505 aa).

6-10 is an ATP binding site; it reads GTEVE. Mg(2+) contacts are provided by E8 and Y93. D95 functions as the Proton acceptor in the catalytic mechanism. E100 is a binding site for Mg(2+). 102–103 lines the ATP pocket; it reads SA. H156 is a binding site for Mg(2+). N158 and R240 together coordinate ATP. A Mg(2+)-binding site is contributed by H242.

The protein belongs to the Pup ligase/Pup deamidase family. Pup deamidase subfamily. As to quaternary structure, interacts with the prokaryotic ubiquitin-like protein Pup. ATP is required as a cofactor.

The enzyme catalyses [prokaryotic ubiquitin-like protein]-C-terminal-L-glutamine + H2O = [prokaryotic ubiquitin-like protein]-C-terminal-L-glutamate + NH4(+). Its pathway is protein degradation; proteasomal Pup-dependent pathway. Functionally, specifically catalyzes the deamidation of the C-terminal glutamine of the prokaryotic ubiquitin-like protein Pup to glutamate, thereby rendering Pup competent for conjugation. Also displays depupylase (DPUP) activity, removing conjugated Pup from target proteins; is thus involved in the recycling of Pup and may function similarly to deubiquitinases (DUBs) in eukaryotes to prevent or promote proteasomal degradation of certain proteins. In Mycobacterium tuberculosis (strain CDC 1551 / Oshkosh), this protein is Pup deamidase/depupylase (dop).